The chain runs to 448 residues: Trigger factor (448 aa).

The 86-residue stretch at 161 to 246 folds into the PPIase FKBP-type domain; that stretch reads GDQVTIDFEG…VHKVAGKQLP (86 aa). The disordered stretch occupies residues 428–448; sequence ALQAAQQQEGAEEEAQEETSA. The span at 437 to 448 shows a compositional bias: acidic residues; that stretch reads GAEEEAQEETSA.

Belongs to the FKBP-type PPIase family. Tig subfamily.

The protein resides in the cytoplasm. The catalysed reaction is [protein]-peptidylproline (omega=180) = [protein]-peptidylproline (omega=0). Functionally, involved in protein export. Acts as a chaperone by maintaining the newly synthesized protein in an open conformation. Functions as a peptidyl-prolyl cis-trans isomerase. This is Trigger factor from Chromohalobacter salexigens (strain ATCC BAA-138 / DSM 3043 / CIP 106854 / NCIMB 13768 / 1H11).